The chain runs to 275 residues: MAIRSYKAYTPGTRNRTISEFSEITKSEPEKSLTFLKHRKKGRNNRGIITTAHKGGGSKRLYRIIDFKRDLKLVPAKVAAIEYDPNRNARIALLHYQNGEKGYILHARGLAVGNMVYSGPNAPIEVGNSLPLSEIPLATEIHNIELTPGKGGQLVRSAGSSAQLLAKEGNYVTLRLPSGEMRFVRKECYATIGQIGNAEISNISIGKAGRNRWLGIRPTVRGVVKNPVDHPHGGGEGRAPIGRSTPVTPWGKPALGRRTRRTKKYSDNLIIRRRK.

Positions 225–259 (KNPVDHPHGGGEGRAPIGRSTPVTPWGKPALGRRT) are disordered.

It belongs to the universal ribosomal protein uL2 family. In terms of assembly, part of the 50S ribosomal subunit.

The protein resides in the plastid. It localises to the cyanelle. This Cyanophora paradoxa protein is Large ribosomal subunit protein uL2c (rpl2).